Here is a 462-residue protein sequence, read N- to C-terminus: Cysteine--tRNA ligase (462 aa).

Residue Cys24 coordinates Zn(2+). A 'HIGH' region motif is present at residues Pro26–His36. Zn(2+) contacts are provided by Cys199, His224, and Glu228. Positions Lys256–Ser260 match the 'KMSKS' region motif. Position 259 (Lys259) interacts with ATP.

It belongs to the class-I aminoacyl-tRNA synthetase family. In terms of assembly, monomer. Zn(2+) is required as a cofactor.

Its subcellular location is the cytoplasm. The enzyme catalyses tRNA(Cys) + L-cysteine + ATP = L-cysteinyl-tRNA(Cys) + AMP + diphosphate. This Campylobacter jejuni subsp. jejuni serotype O:2 (strain ATCC 700819 / NCTC 11168) protein is Cysteine--tRNA ligase (cysS).